We begin with the raw amino-acid sequence, 193 residues long: AP-3 complex subunit sigma-2 (193 aa).

This sequence belongs to the adaptor complexes small subunit family. As to quaternary structure, adaptor protein complex 3 (AP-3) is a heterotetramer composed of two large adaptins (delta-type subunit AP3D1 and beta-type subunit AP3B1 or AP3B2), a medium adaptin (mu-type subunit AP3M1 or AP3M2) and a small adaptin (sigma-type subunit APS1 or AP3S2). Interacts with AGAP1. AP-3 associates with the BLOC-1 complex. As to expression, present in all adult tissues examined.

It localises to the golgi apparatus. Its subcellular location is the cytoplasmic vesicle membrane. In terms of biological role, part of the AP-3 complex, an adaptor-related complex which is not clathrin-associated. The complex is associated with the Golgi region as well as more peripheral structures. It facilitates the budding of vesicles from the Golgi membrane and may be directly involved in trafficking to lysosomes. In concert with the BLOC-1 complex, AP-3 is required to target cargos into vesicles assembled at cell bodies for delivery into neurites and nerve terminals. The polypeptide is AP-3 complex subunit sigma-2 (AP3S2) (Homo sapiens (Human)).